Reading from the N-terminus, the 269-residue chain is Formamidopyrimidine-DNA glycosylase (269 aa).

P2 acts as the Schiff-base intermediate with DNA in catalysis. E3 acts as the Proton donor in catalysis. The Proton donor; for beta-elimination activity role is filled by K57. Positions 90, 109, and 150 each coordinate DNA. The FPG-type zinc finger occupies 235 to 269; sequence QVYGRKGEPCRVCGTPIVATKHAQRATFYCRQCQK. The active-site Proton donor; for delta-elimination activity is R259.

This sequence belongs to the FPG family. In terms of assembly, monomer. Zn(2+) serves as cofactor.

It carries out the reaction Hydrolysis of DNA containing ring-opened 7-methylguanine residues, releasing 2,6-diamino-4-hydroxy-5-(N-methyl)formamidopyrimidine.. The enzyme catalyses 2'-deoxyribonucleotide-(2'-deoxyribose 5'-phosphate)-2'-deoxyribonucleotide-DNA = a 3'-end 2'-deoxyribonucleotide-(2,3-dehydro-2,3-deoxyribose 5'-phosphate)-DNA + a 5'-end 5'-phospho-2'-deoxyribonucleoside-DNA + H(+). Involved in base excision repair of DNA damaged by oxidation or by mutagenic agents. Acts as a DNA glycosylase that recognizes and removes damaged bases. Has a preference for oxidized purines, such as 7,8-dihydro-8-oxoguanine (8-oxoG). Has AP (apurinic/apyrimidinic) lyase activity and introduces nicks in the DNA strand. Cleaves the DNA backbone by beta-delta elimination to generate a single-strand break at the site of the removed base with both 3'- and 5'-phosphates. This chain is Formamidopyrimidine-DNA glycosylase, found in Escherichia coli O7:K1 (strain IAI39 / ExPEC).